Reading from the N-terminus, the 228-residue chain is Uracil-DNA glycosylase (228 aa).

Residue Asp64 is the Proton acceptor of the active site.

The protein belongs to the uracil-DNA glycosylase (UDG) superfamily. UNG family.

The protein localises to the cytoplasm. It carries out the reaction Hydrolyzes single-stranded DNA or mismatched double-stranded DNA and polynucleotides, releasing free uracil.. Functionally, excises uracil residues from the DNA which can arise as a result of misincorporation of dUMP residues by DNA polymerase or due to deamination of cytosine. This Pectobacterium atrosepticum (strain SCRI 1043 / ATCC BAA-672) (Erwinia carotovora subsp. atroseptica) protein is Uracil-DNA glycosylase.